Consider the following 124-residue polypeptide: MSQQASTELTIEEGELPTRFEIELEFVQSLANIPYVTYLLTQLQLWQDPKFKRYLKYLEYWHEPEYAQCIVYPNSLFVLKLLNTLFEGSTVNENGVLEGCEHVPRILQTQGTQWMNEMVERWRE.

Belongs to the Mediator complex subunit 31 family. In terms of assembly, component of the Mediator complex.

Its subcellular location is the nucleus. In terms of biological role, component of the Mediator complex, a coactivator involved in the regulated transcription of nearly all RNA polymerase II-dependent genes. Mediator functions as a bridge to convey information from gene-specific regulatory proteins to the basal RNA polymerase II transcription machinery. Mediator is recruited to promoters by direct interactions with regulatory proteins and serves as a scaffold for the assembly of a functional preinitiation complex with RNA polymerase II and the general transcription factors. The polypeptide is Mediator of RNA polymerase II transcription subunit 31 (SOH1) (Kluyveromyces lactis (strain ATCC 8585 / CBS 2359 / DSM 70799 / NBRC 1267 / NRRL Y-1140 / WM37) (Yeast)).